We begin with the raw amino-acid sequence, 230 residues long: Sugar fermentation stimulation protein homolog (230 aa).

It belongs to the SfsA family.

This is Sugar fermentation stimulation protein homolog from Clostridium botulinum (strain 657 / Type Ba4).